The following is a 323-amino-acid chain: tRNA U34 carboxymethyltransferase (323 aa).

Residues lysine 91, tryptophan 105, lysine 110, glycine 130, 181-182 (IE), methionine 196, tyrosine 200, and arginine 315 contribute to the carboxy-S-adenosyl-L-methionine site.

It belongs to the class I-like SAM-binding methyltransferase superfamily. CmoB family. In terms of assembly, homotetramer.

It catalyses the reaction carboxy-S-adenosyl-L-methionine + 5-hydroxyuridine(34) in tRNA = 5-carboxymethoxyuridine(34) in tRNA + S-adenosyl-L-homocysteine + H(+). Functionally, catalyzes carboxymethyl transfer from carboxy-S-adenosyl-L-methionine (Cx-SAM) to 5-hydroxyuridine (ho5U) to form 5-carboxymethoxyuridine (cmo5U) at position 34 in tRNAs. This chain is tRNA U34 carboxymethyltransferase, found in Serratia proteamaculans (strain 568).